A 27-amino-acid chain; its full sequence is Fructokinase (27 aa).

It belongs to the ROK (NagC/XylR) family. In terms of assembly, homodimer. It depends on Mg(2+) as a cofactor.

The catalysed reaction is D-fructose + ATP = D-fructose 6-phosphate + ADP + H(+). Its activity is regulated as follows. Inhibition by zinc ions. The chain is Fructokinase from Fusobacterium mortiferum.